The following is a 257-amino-acid chain: uncharacterized protein (257 aa).

The signal sequence occupies residues 1–22; the sequence is MIHSKRLRLWLYLVLLAVFIGA. A lipid anchor (N-palmitoyl cysteine) is attached at cysteine 23. Cysteine 23 carries S-diacylglycerol cysteine lipidation.

This sequence belongs to the staphylococcal tandem lipoprotein family.

The protein resides in the cell membrane. This is an uncharacterized protein from Staphylococcus aureus (strain NCTC 8325 / PS 47).